The chain runs to 104 residues: uncharacterized protein (104 aa).

It belongs to the BolA/IbaG family.

This is an uncharacterized protein from Buchnera aphidicola subsp. Acyrthosiphon pisum (strain APS) (Acyrthosiphon pisum symbiotic bacterium).